A 116-amino-acid chain; its full sequence is Tachykinin-3 (116 aa).

An N-terminal signal peptide occupies residues 1-20; sequence MRSAMLFAAVLALSLAWTFG. A propeptide spanning residues 21 to 79 is cleaved from the precursor; the sequence is AVCEEPQGQGGRLSKDSDLYQLPPSLLRRLYDSRPVSLEGLLKVLSKASVGPKETSLPQ. At M91 the chain carries Methionine amide. Residues 93 to 116 form a disordered region; it reads KRNSQPDTPTDVVEENTPSFGILK. A propeptide spanning residues 95 to 116 is cleaved from the precursor; it reads NSQPDTPTDVVEENTPSFGILK.

Belongs to the tachykinin family.

It localises to the secreted. Its function is as follows. Tachykinins are active peptides which excite neurons, evoke behavioral responses, are potent vasodilators and secretagogues, and contract (directly or indirectly) many smooth muscles. Is a critical central regulator of gonadal function. The chain is Tachykinin-3 (Tac3) from Mus musculus (Mouse).